An 838-amino-acid chain; its full sequence is Periplasmic nitrate reductase (838 aa).

Residues 1-29 constitute a signal peptide (tat-type signal); sequence MDMSRRTLLKAQAAAAAAAVAGIDLPAEA. The 57-residue stretch at 40 to 96 folds into the 4Fe-4S Mo/W bis-MGD-type domain; sequence LKWSKAPCRFCGTGCGVMVGVKDGRVVATHGDMQAEVNRGLNCVKGYFLSKIMYGAD. The [4Fe-4S] cluster site is built by Cys47, Cys50, Cys54, and Cys82. Residues Lys84, Gln151, Asn176, Cys180, 213-220, 244-248, 263-265, Met374, Gln378, Asn484, 510-511, Lys533, Asp560, and 720-729 each bind Mo-bis(molybdopterin guanine dinucleotide); these read WGSNMAEM, STYEH, GTD, SD, and TGRVLEHWHS. Substrate is bound at residue Phe796. Residues Asn804 and Lys821 each coordinate Mo-bis(molybdopterin guanine dinucleotide).

Belongs to the prokaryotic molybdopterin-containing oxidoreductase family. NasA/NapA/NarB subfamily. As to quaternary structure, component of the periplasmic nitrate reductase NapAB complex composed of NapA and NapB. It depends on [4Fe-4S] cluster as a cofactor. Mo-bis(molybdopterin guanine dinucleotide) serves as cofactor. Post-translationally, predicted to be exported by the Tat system. The position of the signal peptide cleavage has not been experimentally proven.

The protein localises to the periplasm. The enzyme catalyses 2 Fe(II)-[cytochrome] + nitrate + 2 H(+) = 2 Fe(III)-[cytochrome] + nitrite + H2O. Functionally, catalytic subunit of the periplasmic nitrate reductase complex NapAB. Receives electrons from NapB and catalyzes the reduction of nitrate to nitrite. The chain is Periplasmic nitrate reductase from Methylobacterium sp. (strain 4-46).